Consider the following 478-residue polypeptide: Cytochrome c-552 (478 aa).

Residues 1-26 (MARKTLRARRFFSLIFPFFFITSVYA) form the signal peptide. His94 serves as a coordination point for heme c. Residues Cys122, Cys125, and Lys126 each contribute to the heme site. Heme c is bound by residues Cys160, Cys163, His164, Cys209, Cys212, and His213. Glu215, Tyr216, Lys261, and Gln263 together coordinate Ca(2+). Tyr216 is a binding site for substrate. His264 is a binding site for substrate. Residues His275, Cys282, Cys285, His286, His301, Cys314, Cys317, His318, and His393 each contribute to the heme c site.

This sequence belongs to the cytochrome c-552 family. The cofactor is Ca(2+). Requires heme c as cofactor.

It is found in the periplasm. It catalyses the reaction 6 Fe(III)-[cytochrome c] + NH4(+) + 2 H2O = 6 Fe(II)-[cytochrome c] + nitrite + 8 H(+). The protein operates within nitrogen metabolism; nitrate reduction (assimilation). In terms of biological role, catalyzes the reduction of nitrite to ammonia, consuming six electrons in the process. The protein is Cytochrome c-552 of Salmonella dublin (strain CT_02021853).